The sequence spans 304 residues: Acetaldehyde dehydrogenase 1 (304 aa).

11–14 (SGNI) contributes to the NAD(+) binding site. The active-site Acyl-thioester intermediate is the C130. Residues 161 to 169 (SVGPGTRAN) and N272 contribute to the NAD(+) site.

The protein belongs to the acetaldehyde dehydrogenase family.

It catalyses the reaction acetaldehyde + NAD(+) + CoA = acetyl-CoA + NADH + H(+). This Azoarcus sp. (strain BH72) protein is Acetaldehyde dehydrogenase 1 (lapF).